Consider the following 420-residue polypeptide: ATP phosphoribosyltransferase regulatory subunit (420 aa).

This sequence belongs to the class-II aminoacyl-tRNA synthetase family. HisZ subfamily. Heteromultimer composed of HisG and HisZ subunits.

Its subcellular location is the cytoplasm. It functions in the pathway amino-acid biosynthesis; L-histidine biosynthesis; L-histidine from 5-phospho-alpha-D-ribose 1-diphosphate: step 1/9. Required for the first step of histidine biosynthesis. May allow the feedback regulation of ATP phosphoribosyltransferase activity by histidine. The chain is ATP phosphoribosyltransferase regulatory subunit from Bacillus cereus (strain B4264).